The chain runs to 685 residues: Polyphosphate kinase (685 aa).

An ATP-binding site is contributed by Asn45. Mg(2+) is bound by residues Arg375 and Arg405. His435 (phosphohistidine intermediate) is an active-site residue. ATP-binding residues include Tyr468, Arg564, and His592.

The protein belongs to the polyphosphate kinase 1 (PPK1) family. Mg(2+) serves as cofactor. An intermediate of this reaction is the autophosphorylated ppk in which a phosphate is covalently linked to a histidine residue through a N-P bond.

It catalyses the reaction [phosphate](n) + ATP = [phosphate](n+1) + ADP. Its function is as follows. Catalyzes the reversible transfer of the terminal phosphate of ATP to form a long-chain polyphosphate (polyP). This Neisseria gonorrhoeae (strain ATCC 700825 / FA 1090) protein is Polyphosphate kinase.